Here is a 327-residue protein sequence, read N- to C-terminus: MHGIKRKQWTKELLRQKRVQDEKKIYDYRSLTENVLNMRDEKIYSIEALKKTSELLEKNPEFNAIWNYRRDIIASLASELEIPFWDKELVFVMMLLKDYPKVYWIWNHRLWVLKHYPTSSPKVWQTELAVVNKLLEQDARNYHGWHYRRIVVGNIESITNKSLDKEEFEYTTIKINNNISNYSAWHQRVQIISRMFQKGEVGNQKEYIRTEISYIINAMFTDAEDQSVWFYIKWFIKNDIVCKTLDEQEYLKMLKDLRENILLINNDEIEFSGKQNIWCLKILLVLEDILEEKEALTERSSEQYLVQLIDADPLRKNRYLHLLEQHK.

PFTA repeat units follow at residues 44 to 78, 84 to 118, 123 to 157, 163 to 197, and 207 to 241; these read YSIE…SLAS, FWDK…HYPT, VWQT…NIES, LDKE…RMFQ, and YIRT…NDIV.

It belongs to the protein prenyltransferase subunit alpha family. As to quaternary structure, heterodimer of an alpha and a beta subunit.

It catalyses the reaction geranylgeranyl diphosphate + L-cysteinyl-[protein] = S-geranylgeranyl-L-cysteinyl-[protein] + diphosphate. In terms of biological role, catalyzes the transfer of a geranyl-geranyl moiety from geranyl-geranyl pyrophosphate to proteins having the C-terminal -XCC or -XCXC, where both cysteines may become modified. Acts on YPT1 and SEC4. The protein is Geranylgeranyl transferase type-2 subunit alpha (BET4) of Saccharomyces cerevisiae (strain ATCC 204508 / S288c) (Baker's yeast).